The sequence spans 130 residues: Phosphoribosyl-AMP cyclohydrolase (130 aa).

Asp77 is a binding site for Mg(2+). Cys78 is a binding site for Zn(2+). Residues Asp79 and Asp81 each coordinate Mg(2+). Zn(2+) contacts are provided by Cys95 and Cys102.

Belongs to the PRA-CH family. Homodimer. Mg(2+) is required as a cofactor. It depends on Zn(2+) as a cofactor.

The protein resides in the cytoplasm. The enzyme catalyses 1-(5-phospho-beta-D-ribosyl)-5'-AMP + H2O = 1-(5-phospho-beta-D-ribosyl)-5-[(5-phospho-beta-D-ribosylamino)methylideneamino]imidazole-4-carboxamide. The protein operates within amino-acid biosynthesis; L-histidine biosynthesis; L-histidine from 5-phospho-alpha-D-ribose 1-diphosphate: step 3/9. In terms of biological role, catalyzes the hydrolysis of the adenine ring of phosphoribosyl-AMP. In Pseudomonas putida (strain GB-1), this protein is Phosphoribosyl-AMP cyclohydrolase.